Consider the following 432-residue polypeptide: Adenylosuccinate synthetase (432 aa).

GTP is bound by residues 12–18 (GDEGKGK) and 40–42 (GHT). The active-site Proton acceptor is the aspartate 13. Residues aspartate 13 and glycine 40 each contribute to the Mg(2+) site. Residues 13-16 (DEGK), 38-41 (NAGH), threonine 130, arginine 144, glutamine 225, threonine 240, and arginine 304 contribute to the IMP site. Histidine 41 serves as the catalytic Proton donor. Residue 300 to 306 (ATTGRPR) participates in substrate binding. Residues arginine 306, 332-334 (KLD), and 414-416 (SVG) each bind GTP.

Belongs to the adenylosuccinate synthetase family. In terms of assembly, homodimer. The cofactor is Mg(2+).

Its subcellular location is the cytoplasm. The enzyme catalyses IMP + L-aspartate + GTP = N(6)-(1,2-dicarboxyethyl)-AMP + GDP + phosphate + 2 H(+). Its pathway is purine metabolism; AMP biosynthesis via de novo pathway; AMP from IMP: step 1/2. Its function is as follows. Plays an important role in the de novo pathway of purine nucleotide biosynthesis. Catalyzes the first committed step in the biosynthesis of AMP from IMP. This Anaeromyxobacter dehalogenans (strain 2CP-C) protein is Adenylosuccinate synthetase.